A 207-amino-acid polypeptide reads, in one-letter code: MVASLVVLISGSGSNLQAIIDATLNGVLKGEAAVTHVLSNRKNAYGLERAAKAGIPTSLHTLLPYKKEYGPEIGRKKYDAELAEKIIKLQPSLVVCAGWMHILSPEVLIPLETNKIGIINLHPALPGAFNGIHAIERAFEAAQQGKITHTGAMVHWVIAAVDEGKPIIVQEVPILSTDSIEALEEKIHAAEHVILVQAIHQIITDNK.

Residue 13-15 (GSN) coordinates N(1)-(5-phospho-beta-D-ribosyl)glycinamide. Residues 100-103 (MHIL) and N120 contribute to the (6R)-10-formyltetrahydrofolate site. The active-site Proton donor is H122. D162 contributes to the (6R)-10-formyltetrahydrofolate binding site. Residue E191 coordinates N(1)-(5-phospho-beta-D-ribosyl)glycinamide.

Belongs to the GART family.

It catalyses the reaction N(1)-(5-phospho-beta-D-ribosyl)glycinamide + (6R)-10-formyltetrahydrofolate = N(2)-formyl-N(1)-(5-phospho-beta-D-ribosyl)glycinamide + (6S)-5,6,7,8-tetrahydrofolate + H(+). It functions in the pathway purine metabolism; IMP biosynthesis via de novo pathway; N(2)-formyl-N(1)-(5-phospho-D-ribosyl)glycinamide from N(1)-(5-phospho-D-ribosyl)glycinamide (10-formyl THF route): step 1/1. The polypeptide is Phosphoribosylglycinamide formyltransferase (ade5) (Schizosaccharomyces pombe (strain 972 / ATCC 24843) (Fission yeast)).